The chain runs to 95 residues: Bacterial microcompartment shell protein EutM (95 aa).

The 85-residue stretch at 6–90 folds into the BMC domain; sequence ALGMIETKGL…PHFEVDAILP (85 aa).

Belongs to the bacterial microcompartments protein family. Homohexamer; has a positively charged pore 9 Angstroms in diameter. The hexamers pack into a two-dimensional array. May interact with EutQ.

The protein localises to the bacterial microcompartment. It functions in the pathway amine and polyamine degradation; ethanolamine degradation. Functionally, a component of the bacterial microcompartment (BMC) shell dedicated to ethanolamine degradation. Each homohexamer has a central pore with an opening of up to 9.0 Angstroms. Expression of the eut operon may allow this bacteria to use ethanolamine as a carbon, nitrogen and energy source. The pore probably allows metabolite passage into and out of the BMC. This chain is Bacterial microcompartment shell protein EutM, found in Clostridioides difficile (strain 630) (Peptoclostridium difficile).